We begin with the raw amino-acid sequence, 133 residues long: Large ribosomal subunit protein uL14 (133 aa).

Belongs to the universal ribosomal protein uL14 family. Part of the 50S ribosomal subunit. Forms a cluster with proteins L3 and L19. In the 70S ribosome, L14 and L19 interact and together make contacts with the 16S rRNA in bridges B5 and B8.

Its function is as follows. Binds to 23S rRNA. Forms part of two intersubunit bridges in the 70S ribosome. This chain is Large ribosomal subunit protein uL14, found in Gloeobacter violaceus (strain ATCC 29082 / PCC 7421).